A 226-amino-acid chain; its full sequence is MEPIKNLPRLCRTLGYEFTQIELLTQALTHRSAANKHNERLEFLGDSILSIVISDALYHQFPKATEGDLSRMRATLVRGDTLTIIAQEFKLGDYLYLGPGELKSGGFRRESILADAVEAIIGAIYLDSDLEVCRKLLLTWYAERLAEIQPGVSQKDAKTLLQEYLQGLKKPLPDYQVINIEGDAHDQTFTVECRIEDLSQSVIGVASSRRKAEQIAAAQVLELLKK.

The region spanning 7 to 129 (LPRLCRTLGY…IIGAIYLDSD (123 aa)) is the RNase III domain. Residue glutamate 42 coordinates Mg(2+). The active site involves aspartate 46. Mg(2+)-binding residues include aspartate 115 and glutamate 118. Glutamate 118 is a catalytic residue. The DRBM domain maps to 156–226 (DAKTLLQEYL…AAQVLELLKK (71 aa)).

This sequence belongs to the ribonuclease III family. As to quaternary structure, homodimer. The cofactor is Mg(2+).

It localises to the cytoplasm. The catalysed reaction is Endonucleolytic cleavage to 5'-phosphomonoester.. Functionally, digests double-stranded RNA. Involved in the processing of primary rRNA transcript to yield the immediate precursors to the large and small rRNAs (23S and 16S). Processes some mRNAs, and tRNAs when they are encoded in the rRNA operon. Processes pre-crRNA and tracrRNA of type II CRISPR loci if present in the organism. The protein is Ribonuclease 3 of Shewanella sp. (strain W3-18-1).